The following is a 73-amino-acid chain: UPF0154 protein MG335.1 (73 aa).

A helical transmembrane segment spans residues 6 to 26; that stretch reads LALGLGIPLSLLVGMILGYFI.

The protein belongs to the UPF0154 family.

The protein localises to the membrane. This chain is UPF0154 protein MG335.1, found in Mycoplasma genitalium (strain ATCC 33530 / DSM 19775 / NCTC 10195 / G37) (Mycoplasmoides genitalium).